A 114-amino-acid polypeptide reads, in one-letter code: Hydrogenase maturation factor HypA (114 aa).

Residue H2 coordinates Ni(2+). Residues C73, C76, C89, and C92 each coordinate Zn(2+).

Belongs to the HypA/HybF family.

Involved in the maturation of [NiFe] hydrogenases. Required for nickel insertion into the metal center of the hydrogenase. In Caldanaerobacter subterraneus subsp. tengcongensis (strain DSM 15242 / JCM 11007 / NBRC 100824 / MB4) (Thermoanaerobacter tengcongensis), this protein is Hydrogenase maturation factor HypA.